The following is a 711-amino-acid chain: Polyribonucleotide nucleotidyltransferase (711 aa).

Mg(2+) contacts are provided by aspartate 486 and aspartate 492. The region spanning 553–612 is the KH domain; sequence PRIHTIKINPDKIKDVIGKGGSVIRALTEETGTTIEIEDDGTVKIAATDGEKAKHAIRRI. One can recognise an S1 motif domain in the interval 622 to 690; that stretch reads GRIYNGKVTR…RQGRVRLSIK (69 aa). A disordered region spans residues 690-711; sequence KEATEQSQPAAAPEAPAAEQGE. Over residues 694–711 the composition is skewed to low complexity; sequence EQSQPAAAPEAPAAEQGE.

The protein belongs to the polyribonucleotide nucleotidyltransferase family. Component of the RNA degradosome, which is a multiprotein complex involved in RNA processing and mRNA degradation. Requires Mg(2+) as cofactor.

Its subcellular location is the cytoplasm. The catalysed reaction is RNA(n+1) + phosphate = RNA(n) + a ribonucleoside 5'-diphosphate. In terms of biological role, involved in mRNA degradation. Catalyzes the phosphorolysis of single-stranded polyribonucleotides processively in the 3'- to 5'-direction. This is Polyribonucleotide nucleotidyltransferase from Citrobacter koseri (strain ATCC BAA-895 / CDC 4225-83 / SGSC4696).